The primary structure comprises 299 residues: Delta-9 desaturase-like 2 protein (299 aa).

A helical membrane pass occupies residues 55–75 (WEAFRFGIILAILTNLCITFS). The Histidine box-1 motif lies at 77-82 (HRNLTH). The short motif at 114–118 (HRFHH) is the Histidine box-2 element. Residues 174–194 (LVLHILAFWTLIYLWGGLPYL) traverse the membrane as a helical segment. Residues 246–250 (HNNHH) carry the Histidine box-3 motif. The chain crosses the membrane as a helical span at residues 262 to 282 (WYQLDITWYLIWFFQALGLAT).

This sequence belongs to the fatty acid desaturase type 1 family. Requires Fe cation as cofactor.

The protein localises to the endoplasmic reticulum membrane. Its pathway is lipid metabolism; polyunsaturated fatty acid biosynthesis. The polypeptide is Delta-9 desaturase-like 2 protein (Arabidopsis thaliana (Mouse-ear cress)).